The primary structure comprises 761 residues: Phosphoribosylformylglycinamidine synthase subunit PurL (761 aa).

Residue His58 is part of the active site. Residues Tyr61 and Lys105 each contribute to the ATP site. Glu107 serves as a coordination point for Mg(2+). Substrate-binding positions include 108–111 (SHNH) and Arg130. Residue His109 is the Proton acceptor of the active site. Asp131 lines the Mg(2+) pocket. Gln259 is a substrate binding site. Position 287 (Asp287) interacts with Mg(2+). Residue 331 to 333 (ESQ) coordinates substrate. ATP-binding residues include Asn519 and Gly556. Asn557 is a binding site for Mg(2+). Position 559 (Ser559) interacts with substrate.

It belongs to the FGAMS family. As to quaternary structure, monomer. Part of the FGAM synthase complex composed of 1 PurL, 1 PurQ and 2 PurS subunits.

It localises to the cytoplasm. The catalysed reaction is N(2)-formyl-N(1)-(5-phospho-beta-D-ribosyl)glycinamide + L-glutamine + ATP + H2O = 2-formamido-N(1)-(5-O-phospho-beta-D-ribosyl)acetamidine + L-glutamate + ADP + phosphate + H(+). The protein operates within purine metabolism; IMP biosynthesis via de novo pathway; 5-amino-1-(5-phospho-D-ribosyl)imidazole from N(2)-formyl-N(1)-(5-phospho-D-ribosyl)glycinamide: step 1/2. Its function is as follows. Part of the phosphoribosylformylglycinamidine synthase complex involved in the purines biosynthetic pathway. Catalyzes the ATP-dependent conversion of formylglycinamide ribonucleotide (FGAR) and glutamine to yield formylglycinamidine ribonucleotide (FGAM) and glutamate. The FGAM synthase complex is composed of three subunits. PurQ produces an ammonia molecule by converting glutamine to glutamate. PurL transfers the ammonia molecule to FGAR to form FGAM in an ATP-dependent manner. PurS interacts with PurQ and PurL and is thought to assist in the transfer of the ammonia molecule from PurQ to PurL. The chain is Phosphoribosylformylglycinamidine synthase subunit PurL from Rhodococcus opacus (strain B4).